The chain runs to 188 residues: MPVADTSQLTSGVAERYASSLFELALEQGAVDSVTADLDHFQAMLDESADLKRFVASPVFSAEDQLKAIVAISEKAGISGFFANFLKVVARNRRLFALPGMIKAFRIIAANHRGEISAEVTSAHALSQAQETELKVALKGVTGKDVTIAVTVDPSILGGLIVKVGSRQIDTSLRTKLSTLKLALKEVG.

It belongs to the ATPase delta chain family. In terms of assembly, F-type ATPases have 2 components, F(1) - the catalytic core - and F(0) - the membrane proton channel. F(1) has five subunits: alpha(3), beta(3), gamma(1), delta(1), epsilon(1). F(0) has three main subunits: a(1), b(2) and c(10-14). The alpha and beta chains form an alternating ring which encloses part of the gamma chain. F(1) is attached to F(0) by a central stalk formed by the gamma and epsilon chains, while a peripheral stalk is formed by the delta and b chains.

Its subcellular location is the cell inner membrane. F(1)F(0) ATP synthase produces ATP from ADP in the presence of a proton or sodium gradient. F-type ATPases consist of two structural domains, F(1) containing the extramembraneous catalytic core and F(0) containing the membrane proton channel, linked together by a central stalk and a peripheral stalk. During catalysis, ATP synthesis in the catalytic domain of F(1) is coupled via a rotary mechanism of the central stalk subunits to proton translocation. Its function is as follows. This protein is part of the stalk that links CF(0) to CF(1). It either transmits conformational changes from CF(0) to CF(1) or is implicated in proton conduction. This is ATP synthase subunit delta from Rhizobium johnstonii (strain DSM 114642 / LMG 32736 / 3841) (Rhizobium leguminosarum bv. viciae).